The following is a 305-amino-acid chain: Nitrogen assimilation regulatory protein nac (305 aa).

The HTH lysR-type domain occupies 1 to 58 (MNFRRLKYFVKIVDIGSLTQAAEVLHIAQPALSQQVATLEGELNQQLLIRTKRGVTPT). The H-T-H motif DNA-binding region spans 18 to 37 (LTQAAEVLHIAQPALSQQVA).

Belongs to the LysR transcriptional regulatory family.

Functionally, transcriptional activator for the hut, put and ure operons and repressor for the gdh and gltB operons in response to nitrogen limitation. Negative regulator of its own expression. This chain is Nitrogen assimilation regulatory protein nac (nac), found in Escherichia coli (strain K12).